The following is a 382-amino-acid chain: GDP-mannose transporter (382 aa).

The Cytoplasmic segment spans residues 1–40; it reads MADDKKTNEYTIEMDKLDHGNKDFEAPAPAVRPRGPPVAQ. The chain crosses the membrane as a helical span at residues 41–61; the sequence is LANNPILPVLAYCGSSILMTV. At 62–71 the chain is on the lumenal side; that stretch reads MNKYVLSGRD. Residues 72 to 92 traverse the membrane as a helical segment; that stretch reads FNLNFFLLCVQSIVCIVAIQT. Topologically, residues 93-110 are cytoplasmic; that stretch reads CKVSKLITYRDFNSDEAK. The chain crosses the membrane as a helical span at residues 111–127; sequence KWFPITLLLIGMIYTGS. At 128-134 the chain is on the lumenal side; sequence KALQYLS. Residues 135-151 traverse the membrane as a helical segment; sequence IPVYTIFKNLTIILIAY. The Cytoplasmic portion of the chain corresponds to 152–160; that stretch reads GEVLWFGGS. Residues 161–182 traverse the membrane as a helical segment; sequence VTGLTLFSFGLMVLSSIIAAWA. At 183 to 200 the chain is on the lumenal side; that stretch reads DIKHAVESSGDATAKVST. A helical membrane pass occupies residues 201 to 221; the sequence is LNAGYIWMLINCLCTSSYVLG. The Cytoplasmic segment spans residues 222 to 233; the sequence is MRKRIKLTNFKD. A helical transmembrane segment spans residues 234–254; it reads FDTMFYNNLLSIPVLLVLTFL. At 255–274 the chain is on the lumenal side; the sequence is MEDWSSANIARNFPSTDRNG. The helical transmembrane segment at 275 to 295 threads the bilayer; it reads ILFAMILSGLSSVFISYTSAW. Residues 296-303 are Cytoplasmic-facing; it reads CVRVTSST. A helical membrane pass occupies residues 304-324; it reads TYSMVGALNKLPIALSGLIFF. At 325 to 327 the chain is on the lumenal side; that stretch reads DAP. The chain crosses the membrane as a helical span at residues 328 to 348; the sequence is VTFPSVSAIVVGFISGIVYAV. Residues 349–382 lie on the Cytoplasmic side of the membrane; it reads AKIKQSAKPKTGVLPMSNPPVSASSQSMRDSLRS. The segment at 358–382 is disordered; it reads KTGVLPMSNPPVSASSQSMRDSLRS. A compositionally biased stretch (polar residues) spans 367–382; the sequence is PPVSASSQSMRDSLRS.

Belongs to the TPT transporter family. SLC35D subfamily. Homooligomer.

The protein localises to the golgi apparatus membrane. Its subcellular location is the cytoplasmic vesicle membrane. It localises to the endoplasmic reticulum membrane. Involved in the import of GDP-mannose from the cytoplasm into the Golgi lumen. The protein is GDP-mannose transporter (gmt1) of Aspergillus fumigatus (strain CBS 144.89 / FGSC A1163 / CEA10) (Neosartorya fumigata).